The following is a 63-amino-acid chain: Large ribosomal subunit protein bL32 (63 aa).

The segment covering 1 to 18 (MAHPKRRISRSRRDKRRA) has biased composition (basic residues). The interval 1-27 (MAHPKRRISRSRRDKRRAQYNAKTKAP) is disordered.

It belongs to the bacterial ribosomal protein bL32 family.

This is Large ribosomal subunit protein bL32 from Chloroherpeton thalassium (strain ATCC 35110 / GB-78).